We begin with the raw amino-acid sequence, 157 residues long: N5-carboxyaminoimidazole ribonucleotide mutase (157 aa).

Residues serine 8, aspartate 11, and arginine 38 each coordinate substrate.

The protein belongs to the AIR carboxylase family. Class I subfamily.

It catalyses the reaction 5-carboxyamino-1-(5-phospho-D-ribosyl)imidazole + H(+) = 5-amino-1-(5-phospho-D-ribosyl)imidazole-4-carboxylate. The protein operates within purine metabolism; IMP biosynthesis via de novo pathway; 5-amino-1-(5-phospho-D-ribosyl)imidazole-4-carboxylate from 5-amino-1-(5-phospho-D-ribosyl)imidazole (N5-CAIR route): step 2/2. Catalyzes the conversion of N5-carboxyaminoimidazole ribonucleotide (N5-CAIR) to 4-carboxy-5-aminoimidazole ribonucleotide (CAIR). This chain is N5-carboxyaminoimidazole ribonucleotide mutase, found in Methanocaldococcus jannaschii (strain ATCC 43067 / DSM 2661 / JAL-1 / JCM 10045 / NBRC 100440) (Methanococcus jannaschii).